The sequence spans 399 residues: UDP-N-acetylglucosamine--N-acetylmuramyl-(pentapeptide) pyrophosphoryl-undecaprenol N-acetylglucosamine transferase (399 aa).

A compositionally biased stretch (basic residues) spans 1–21 (MTSRFGHSHHPRRGRSARARA). Positions 1-30 (MTSRFGHSHHPRRGRSARARAGRREGVQSN) are disordered. Residues 58–60 (TGG), N170, R206, S234, I288, and Q333 each bind UDP-N-acetyl-alpha-D-glucosamine.

This sequence belongs to the glycosyltransferase 28 family. MurG subfamily.

It is found in the cell inner membrane. It catalyses the reaction di-trans,octa-cis-undecaprenyl diphospho-N-acetyl-alpha-D-muramoyl-L-alanyl-D-glutamyl-meso-2,6-diaminopimeloyl-D-alanyl-D-alanine + UDP-N-acetyl-alpha-D-glucosamine = di-trans,octa-cis-undecaprenyl diphospho-[N-acetyl-alpha-D-glucosaminyl-(1-&gt;4)]-N-acetyl-alpha-D-muramoyl-L-alanyl-D-glutamyl-meso-2,6-diaminopimeloyl-D-alanyl-D-alanine + UDP + H(+). It functions in the pathway cell wall biogenesis; peptidoglycan biosynthesis. Cell wall formation. Catalyzes the transfer of a GlcNAc subunit on undecaprenyl-pyrophosphoryl-MurNAc-pentapeptide (lipid intermediate I) to form undecaprenyl-pyrophosphoryl-MurNAc-(pentapeptide)GlcNAc (lipid intermediate II). The polypeptide is UDP-N-acetylglucosamine--N-acetylmuramyl-(pentapeptide) pyrophosphoryl-undecaprenol N-acetylglucosamine transferase (Acidovorax ebreus (strain TPSY) (Diaphorobacter sp. (strain TPSY))).